The following is an 85-amino-acid chain: MKITGGLLLLCTVVYFCSSSEAASLSPKKVDCSIYKKYPVVAIPCPITYLPVCGSDYITYGNECHLCTESLKSNGRVQFLHDGSC.

Positions 1 to 19 (MKITGGLLLLCTVVYFCSS) are cleaved as a signal peptide. The 60-residue stretch at 26–85 (SPKKVDCSIYKKYPVVAIPCPITYLPVCGSDYITYGNECHLCTESLKSNGRVQFLHDGSC) folds into the Kazal-like domain. Cystine bridges form between cysteine 32-cysteine 67, cysteine 45-cysteine 64, and cysteine 53-cysteine 85.

Its subcellular location is the secreted. Its function is as follows. Probable serine protease inhibitor. This Homo sapiens (Human) protein is Serine protease inhibitor Kazal-type 7 (SPINK7).